The sequence spans 847 residues: Glucans biosynthesis glucosyltransferase H (847 aa).

The Cytoplasmic portion of the chain corresponds to 1–138 (MNKTTEYIDA…KWRTVGTIRR (138 aa)). The helical transmembrane segment at 139–156 (YILLILTLAQTVVATWYM) threads the bilayer. The Periplasmic segment spans residues 157–193 (KTILPYQGWALINPMDMVGQDIWVSFMQLLPYMLQTG). Residues 194-216 (ILILFAVLFCWVSAGFWTALMGF) traverse the membrane as a helical segment. The Cytoplasmic segment spans residues 217 to 511 (LQLLIGRDKY…LVKGMHPVHR (295 aa)). The chain crosses the membrane as a helical span at residues 512 to 534 (AVFLTGVMSYLSAPLWFMFLALS). The Periplasmic segment spans residues 535 to 567 (TALQVVHALTEPQYFLQPRQLFPVWPQWRPELA). A helical transmembrane segment spans residues 568–590 (IALFASTMVLLFLPKLLSIMLIW). Residues 591–602 (CKGTKEYGGFWR) are Cytoplasmic-facing. A helical transmembrane segment spans residues 603–625 (VTLSLLLEVLFSVLLAPVRMLFH). Residues 626 to 679 (TVFVVSAFLGWEVVWNSPQRDDDSTPWGEAFMRHGSQLLLGLVWAVGMAWLDLR) lie on the Periplasmic side of the membrane. The chain crosses the membrane as a helical span at residues 680–702 (FLFWLAPIVFSLILSPFVSVISS). Topologically, residues 703-847 (RSTVGLRTKR…ALQGRTSSAG (145 aa)) are cytoplasmic.

The protein belongs to the glycosyltransferase 2 family. OpgH subfamily.

It is found in the cell inner membrane. It functions in the pathway glycan metabolism; osmoregulated periplasmic glucan (OPG) biosynthesis. In terms of biological role, involved in the biosynthesis of osmoregulated periplasmic glucans (OPGs). The chain is Glucans biosynthesis glucosyltransferase H from Salmonella typhi.